Here is a 48-residue protein sequence, read N- to C-terminus: Large ribosomal subunit protein bL36c (48 aa).

This sequence belongs to the bacterial ribosomal protein bL36 family.

Its subcellular location is the plastid. The protein resides in the chloroplast. This is Large ribosomal subunit protein bL36c (rpl36) from Guillardia theta (Cryptophyte).